Here is a 770-residue protein sequence, read N- to C-terminus: Shutoff protein (770 aa).

2 disordered regions span residues 1–20 and 30–49; these read MEED…PNSE and EEEN…PEDG. The segment covering 10–19 has biased composition (polar residues); sequence DSETLTTPNS. Residues 248 to 312 form a binding to host EIF4G region; the sequence is VMDQVLIKRA…AVLVTVELEC (65 aa). An RRM domain is found at 315 to 433; that stretch reads RFFANPQTLR…ELWTSFDERT (119 aa). Phosphotyrosine; by host occurs at positions 332 and 647. A disordered region spans residues 661–770; it reads LSAAASCRSQ…TATMFTESQP (110 aa). Basic residues predominate over residues 726–739; sequence GGPRGRGGRNHRQR. The span at 742 to 755 shows a compositional bias: polar residues; that stretch reads TIFQKTRSEPTSEN.

This sequence belongs to the adenoviridae shutoff protein family. Monomer. Interacts with hexon protein; this interaction allows chaperoning and trimerization of hexon proteins. Interacts (via N-terminus) with host initiation factor EIF4G (via C-terminus). Interacts (via RRM domain) with viral mRNAs that contain the tripartite leader; this interaction allows ribosome shunting and expression of viral late mRNAs. In terms of processing, might be cleaved by the viral protease. Phosphorylated. Tyrosine phosphorylation enhances preferential binding to tripartite leader mRNAs and allows ribosome shunting. Post-translationally, methylated. Asymmetric dimethylation by host PRMT1 of the Arg/Gly-rich region may regulate shutoff protein binding to hexon and promote the capsid assembly in the nucleus.

The protein localises to the host cytoplasm. Protein that inhibits host translation while promoting late viral translation by ribosome shunting. Blocks host cap-dependent translation by binding to eIF4G, displacing MKNK1 from cap initiation complexes and preventing EIF4E phosphorylation. Binds to the tripartite leader sequence of viral late mRNAs and recruits host eIF4G, PABPC1/poly-A binding protein and 40S ribosomes subunits on viral mRNAs, allowing ribosome shunting and efficient translation of late viral mRNAs even though conventional translation via ribosome scanning from the cap has been shut off in the host cell. During assembly, acts as a chaperone protein that helps hexon proteins assembly into trimers. In Human adenovirus F serotype 40 (HAdV-40), this protein is Shutoff protein.